A 276-amino-acid chain; its full sequence is Expansin-A25 (276 aa).

The signal sequence occupies residues Met1 to Gly27. The region spanning Gln73 to Gly183 is the Expansin-like EG45 domain. Residues Tyr193–Gly272 form the Expansin-like CBD domain.

Belongs to the expansin family. Expansin A subfamily.

The protein localises to the secreted. Its subcellular location is the cell wall. It is found in the membrane. Functionally, causes loosening and extension of plant cell walls by disrupting non-covalent bonding between cellulose microfibrils and matrix glucans. No enzymatic activity has been found. The sequence is that of Expansin-A25 (EXPA25) from Arabidopsis thaliana (Mouse-ear cress).